The chain runs to 584 residues: Protein BONZAI 3 (584 aa).

A disordered region spans residues 1-23 (MGGCLSGDVKGGKQAIGGVQQRP). The N-myristoyl glycine moiety is linked to residue G2. 2 C2 domains span residues 34 to 167 (HNDA…TLTL) and 178 to 305 (NRNL…NFVY). Ca(2+) contacts are provided by D67, D73, D126, D128, and D145. Residues 344–563 (NFMVAVDFTA…SVVQALLEEL (220 aa)) enclose the VWFA domain.

It belongs to the copine family. In terms of assembly, interacts with BAP1 and BAP2. Ca(2+) is required as a cofactor. As to expression, expressed at an extremely low level.

The protein resides in the cell membrane. In terms of biological role, negative regulator of cell death and defense responses. Repress a number of R genes and may have effects in promoting growth and development. May function in membrane trafficking and in fusion of vesicles with plasma membrane. The protein is Protein BONZAI 3 (BON3) of Arabidopsis thaliana (Mouse-ear cress).